We begin with the raw amino-acid sequence, 476 residues long: Replication factor C large subunit (476 aa).

50–57 (GPPGVGKT) is a binding site for ATP. The segment at 447–476 (YEKGTKKGKGEKRRKGSDEGSGLLKWLKKD) is disordered. The segment covering 452–461 (KKGKGEKRRK) has biased composition (basic residues).

This sequence belongs to the activator 1 small subunits family. RfcL subfamily. Heteromultimer composed of small subunits (RfcS) and large subunits (RfcL).

In terms of biological role, part of the RFC clamp loader complex which loads the PCNA sliding clamp onto DNA. This chain is Replication factor C large subunit, found in Ignicoccus hospitalis (strain KIN4/I / DSM 18386 / JCM 14125).